We begin with the raw amino-acid sequence, 380 residues long: Cytochrome b (380 aa).

4 consecutive transmembrane segments (helical) span residues 33–53 (FGSLLGACLILQITTGLFLAM), 77–98 (WIIRYLHANGASMLFICLFLHV), 113–133 (WNIGIILLLTTMATAFMGYVL), and 178–198 (FFTLHFILPFIITALTTLHLL). Heme b-binding residues include His-83 and His-97. The heme b site is built by His-182 and His-196. His-201 provides a ligand contact to a ubiquinone. The next 4 helical transmembrane spans lie at 226-246 (TKDILGLFLFLLALMVLTLFS), 288-308 (LGGVLALLLSILILAVIPILH), 320-340 (LSQLLYWLLATDLLILTWIGG), and 347-367 (FITIGQVASVLYFTTILILMP).

It belongs to the cytochrome b family. As to quaternary structure, the cytochrome bc1 complex contains 11 subunits: 3 respiratory subunits (MT-CYB, CYC1 and UQCRFS1), 2 core proteins (UQCRC1 and UQCRC2) and 6 low-molecular weight proteins (UQCRH/QCR6, UQCRB/QCR7, UQCRQ/QCR8, UQCR10/QCR9, UQCR11/QCR10 and a cleavage product of UQCRFS1). This cytochrome bc1 complex then forms a dimer. Heme b serves as cofactor.

It is found in the mitochondrion inner membrane. In terms of biological role, component of the ubiquinol-cytochrome c reductase complex (complex III or cytochrome b-c1 complex) that is part of the mitochondrial respiratory chain. The b-c1 complex mediates electron transfer from ubiquinol to cytochrome c. Contributes to the generation of a proton gradient across the mitochondrial membrane that is then used for ATP synthesis. The protein is Cytochrome b (MT-CYB) of Pan paniscus (Pygmy chimpanzee).